Here is a 274-residue protein sequence, read N- to C-terminus: MGTLSVNQNKLQKRLRRLAGEAVADFNMIEEGDKVMVCLSGGKDSYTLLDVLMHFQKVAPIRFDIVAVNMDQKQPGFPEHVLPAYLKELGVEYHIVEKDTHSVVKELIPEGKTTCSLCSRLRRGTLYTFADQIGATKMALGHHRDDIIETFFLNMFFNGALKAMPPKLRADDGRNVVIRPLAYCHEKDIQAYSDLKQFPIIPCNLCGSQENLQRQVVKDMLLDWERKTPGRTESIFRALQNVQPSQLADRKLFDFSQLRIDETAASRFVNVVNI.

The PP-loop motif signature appears at 40-45; it reads SGGKDS. 3 residues coordinate [4Fe-4S] cluster: Cys115, Cys118, and Cys206.

Belongs to the TtcA family. As to quaternary structure, homodimer. It depends on Mg(2+) as a cofactor. [4Fe-4S] cluster serves as cofactor.

The protein resides in the cytoplasm. The enzyme catalyses cytidine(32) in tRNA + S-sulfanyl-L-cysteinyl-[cysteine desulfurase] + AH2 + ATP = 2-thiocytidine(32) in tRNA + L-cysteinyl-[cysteine desulfurase] + A + AMP + diphosphate + H(+). It participates in tRNA modification. Its function is as follows. Catalyzes the ATP-dependent 2-thiolation of cytidine in position 32 of tRNA, to form 2-thiocytidine (s(2)C32). The sulfur atoms are provided by the cysteine/cysteine desulfurase (IscS) system. This is tRNA-cytidine(32) 2-sulfurtransferase from Pseudomonas syringae pv. tomato (strain ATCC BAA-871 / DC3000).